Reading from the N-terminus, the 213-residue chain is CASP-like protein UU2 (213 aa).

Residues 1 to 26 form a disordered region; that stretch reads MEDPKGAWQSDVFDNGRDFKPHDKAP. Residues 1–53 are Cytoplasmic-facing; that stretch reads MEDPKGAWQSDVFDNGRDFKPHDKAPANVTAGTTPPMYNVGAGGSEGNSKALS. Positions 14 to 25 are enriched in basic and acidic residues; that stretch reads DNGRDFKPHDKA. The helical transmembrane segment at 54 to 74 threads the bilayer; the sequence is IISIVLRCLSIMFNVVSLGVI. Residues 75-96 are Extracellular-facing; the sequence is ASNQGKSYFVVWRTLNSSNMQY. N90 carries N-linked (GlcNAc...) asparagine glycosylation. Residues 97–117 form a helical membrane-spanning segment; it reads LFAINVIVLVYCVVQLILSII. At 118–137 the chain is on the cytoplasmic side; it reads NLVQGKMVLSGPTQPASTIT. A helical transmembrane segment spans residues 138–158; that stretch reads YICDQGLTYMLMAGFGAGVAL. Residues 159–184 are Extracellular-facing; that stretch reads QASVDKGESGMLDCSGANEFCGKNKA. The chain crosses the membrane as a helical span at residues 185-205; sequence SAALSFLGFVCIALSANLNYL. Over 206–213 the chain is Cytoplasmic; that stretch reads RLYFMAAK.

This sequence belongs to the Casparian strip membrane proteins (CASP) family. Homodimer and heterodimers.

It localises to the cell membrane. This chain is CASP-like protein UU2, found in Physcomitrium patens (Spreading-leaved earth moss).